The primary structure comprises 339 residues: UDP-N-acetylenolpyruvoylglucosamine reductase (339 aa).

In terms of domain architecture, FAD-binding PCMH-type spans 19–189; sequence VDVQARLFAE…LRVRFKLSRV (171 aa). Arginine 166 is a catalytic residue. The active-site Proton donor is serine 239. Residue glutamate 335 is part of the active site.

This sequence belongs to the MurB family. Requires FAD as cofactor.

It localises to the cytoplasm. The catalysed reaction is UDP-N-acetyl-alpha-D-muramate + NADP(+) = UDP-N-acetyl-3-O-(1-carboxyvinyl)-alpha-D-glucosamine + NADPH + H(+). It participates in cell wall biogenesis; peptidoglycan biosynthesis. Cell wall formation. The sequence is that of UDP-N-acetylenolpyruvoylglucosamine reductase from Pseudomonas savastanoi pv. phaseolicola (strain 1448A / Race 6) (Pseudomonas syringae pv. phaseolicola (strain 1448A / Race 6)).